Reading from the N-terminus, the 358-residue chain is Hydroxyproline O-arabinosyltransferase 3 (358 aa).

Residues 8–28 (LLFLLGFGFFVVTYNLLTLIV) traverse the membrane as a helical; Signal-anchor segment.

In terms of tissue distribution, ubiquitous.

It localises to the golgi apparatus. It is found in the cis-Golgi network membrane. It catalyses the reaction trans-4-hydroxy-L-prolyl-[protein] + UDP-beta-L-arabinofuranose = O-(beta-L-arabinofuranosyl)-trans-4-hydroxy-L-prolyl-[protein] + UDP + H(+). In terms of biological role, glycosyltransferase involved in the O-arabinosylation of several proteins including extensins and small signaling peptides. Catalyzes the transfer of the initial L-arabinose to the hydroxyl group of Hyp residues. Contributes redundantly with HPAT1 and HPAT2 to arabinosylation of EXT3, but main contributor to arabinosylation of CLE peptides. The protein is Hydroxyproline O-arabinosyltransferase 3 of Arabidopsis thaliana (Mouse-ear cress).